Reading from the N-terminus, the 603-residue chain is Coagulation factor XII (603 aa).

The N-terminal stretch at 1 to 18 (GRLLLGSLLVSLESALSA) is a signal peptide. The 49-residue stretch at 41–89 (VTGEPCYFPFQYNRQLYHHCIHKGRPGPRPWCATTPNFDQDQQWAYCLE) folds into the Fibronectin type-II domain. 20 disulfide bridges follow: Cys-46–Cys-72, Cys-60–Cys-87, Cys-97–Cys-109, Cys-103–Cys-118, Cys-120–Cys-129, Cys-134–Cys-162, Cys-160–Cys-169, Cys-177–Cys-188, Cys-182–Cys-197, Cys-199–Cys-208, Cys-216–Cys-294, Cys-237–Cys-276, Cys-265–Cys-289, Cys-345–Cys-472, Cys-383–Cys-399, Cys-391–Cys-461, Cys-422–Cys-425, Cys-488–Cys-557, Cys-520–Cys-536, and Cys-547–Cys-578. The EGF-like 1 domain maps to 93–130 (VKDHCSKHNPCQRGGICVNTLSSPHCLCPDHLTGKHCQ). The Fibronectin type-I domain maps to 132-172 (EKCFEPQLHRFFHENEIWFRTGPAGVAKCHCKGPDAHCKQM). Residues 173–209 (HSQECQTNPCLNGGRCLEVEGHHLCDCPMGYTGPFCD) enclose the EGF-like 2 domain. One can recognise a Kringle domain in the interval 216-294 (CYEGRGVSYR…SWEYCDLAQC (79 aa)). 2 N-linked (GlcNAc...) asparagine glycosylation sites follow: Asn-248 and Asn-270. In terms of domain architecture, Peptidase S1 spans 359–602 (IVGGLVALPG…YLTWIQKHTA (244 aa)). His-398 (charge relay system) is an active-site residue. A glycan (N-linked (GlcNAc...) asparagine) is linked at Asn-419. The Charge relay system role is filled by Asp-447. The Charge relay system role is filled by Ser-551.

Belongs to the peptidase S1 family. In terms of assembly, interacts with HRG; the interaction, which is enhanced in the presence of zinc ions and inhibited by heparin-binding, inhibits factor XII autoactivation and contact-initiated coagulation. In terms of processing, O- and N-glycosylated.

The protein resides in the secreted. The enzyme catalyses Selective cleavage of Arg-|-Ile bonds in factor VII to form factor VIIa and factor XI to form factor XIa.. Its activity is regulated as follows. Activity is promoted in the presence of negatively charged surfaces. Factor XII is a serum glycoprotein that participates in the initiation of blood coagulation, fibrinolysis, and the generation of bradykinin and angiotensin. Prekallikrein is cleaved by factor XII to form kallikrein, which then cleaves factor XII first to alpha-factor XIIa and then trypsin cleaves it to beta-factor XIIa. Alpha-factor XIIa activates factor XI to factor XIa. The protein is Coagulation factor XII (F12) of Cavia porcellus (Guinea pig).